Reading from the N-terminus, the 228-residue chain is MYSIVAEESGLLPRERLLQKGAEVLSDQELLAIVLRTGTRSESVLSMANRILKGMTSLADLSRLSLNELQKIPGIGRVKSIELKAMVELAKRIEKAELARSEQIMSSQQVARRMMLDIGDKPQEHLVAIYLDTQNRIIQQKTVFIGGVRRSIAEPREILHYACHLMATSLIVVHNHPSGEAYPSRNDIDFTQKIKRSCDDLGICLLDHLIVGKSTYYSFREEREDFEL.

Residues 103–225 enclose the MPN domain; it reads QIMSSQQVAR…YYSFREERED (123 aa). 3 residues coordinate Zn(2+): His-174, His-176, and Asp-187. The short motif at 174-187 is the JAMM motif element; the sequence is HNHPSGEAYPSRND.

This sequence belongs to the UPF0758 family.

The sequence is that of UPF0758 protein STER_1430 from Streptococcus thermophilus (strain ATCC BAA-491 / LMD-9).